A 228-amino-acid polypeptide reads, in one-letter code: Glucose-induced degradation protein 8 homolog (228 aa).

Positions 29 to 61 (SKSDLNKLVMNYLVIEGYQEAAAKFQEESSTQT) constitute a LisH domain. Positions 67–124 (SIADRMAIRSAIQCGDVEKGIEIVNDLNPEILDTNPQLYFHLQQQKLIELIRKGMTAE) constitute a CTLH domain.

Belongs to the GID8 family.

The protein localises to the cytoplasm. It localises to the nucleus. In terms of biological role, core component of the CTLH E3 ubiquitin-protein ligase complex that mediates ubiquitination and subsequent proteasomal degradation of target proteins. Acts as a positive regulator of Wnt signaling pathway by promoting beta-catenin (CTNNB1) nuclear accumulation. The chain is Glucose-induced degradation protein 8 homolog from Dictyostelium discoideum (Social amoeba).